A 373-amino-acid chain; its full sequence is Cytoplasmic tRNA 2-thiolation protein 1 (373 aa).

Belongs to the TtcA family. CTU1/NCS6/ATPBD3 subfamily.

It is found in the cytoplasm. It functions in the pathway tRNA modification; 5-methoxycarbonylmethyl-2-thiouridine-tRNA biosynthesis. Its function is as follows. Plays a central role in 2-thiolation of mcm(5)S(2)U at tRNA wobble positions of tRNA(Lys), tRNA(Glu) and tRNA(Gln). Directly binds tRNAs and probably acts by catalyzing adenylation of tRNAs, an intermediate required for 2-thiolation. It is unclear whether it acts as a sulfurtransferase that transfers sulfur from thiocarboxylated URM1 onto the uridine of tRNAs at wobble position. Prior mcm(5) tRNA modification by the elongator complex is required for 2-thiolation. May also be involved in protein urmylation. The sequence is that of Cytoplasmic tRNA 2-thiolation protein 1 from Eremothecium gossypii (strain ATCC 10895 / CBS 109.51 / FGSC 9923 / NRRL Y-1056) (Yeast).